The following is a 514-amino-acid chain: MHPSRMALIRPPLFSSYRFGSLLMEPSSTPGPARNARRSNRRMRHPDKDVDKRVRELDAERDPLSLPEEIVSEVTRAGGRVGIPAKDQSPKQALNINDLQKLEHDELLALAETEGLQEIAALPRQELVFRLLKARMSANGLMYGEGTLEILPDGFGFLRSAQYHYLSCPDDIYVSPSQIRRFGLHTGSHVAGQIRPPKENERYFALLRIEAINHADPMQRQRQKPFDDLTPLHPRTRIVTEHDSQELSTRVVDLFTPIGFGQRGLIVSPPRAGKTMLMQSLARGVLNNYPDAYVVVLLIDERPEEVTDMEREIQSPQCEVISSTFDEPPARHIQVAQMVVEKAKRMVESGTDVVIFLDSITRLARAFNSDSDSATGKLLTGGLDAGAMQKPKSIFGSARKVEEGGSLTILATALVDTGSRMDDVIFEEFKGTGNLEIVLDQDLVARRVWPAIDLTRSGTRREEMLLDQEEHRRIETLRRDLAEHSPVDSMTELIKRMRKTQNNAEFLMSVHPQD.

The interval 25–52 (EPSSTPGPARNARRSNRRMRHPDKDVDK) is disordered. A compositionally biased stretch (basic residues) spans 35-45 (NARRSNRRMRH). Positions 141-216 (LMYGEGTLEI…LRIEAINHAD (76 aa)) constitute a Rho RNA-BD domain. ATP contacts are provided by residues 259 to 264 (GFGQRG), 271 to 276 (RAGKTM), and R302.

Belongs to the Rho family. In terms of assembly, homohexamer. The homohexamer assembles into an open ring structure.

Its function is as follows. Facilitates transcription termination by a mechanism that involves Rho binding to the nascent RNA, activation of Rho's RNA-dependent ATPase activity, and release of the mRNA from the DNA template. The protein is Transcription termination factor Rho of Rhodopirellula baltica (strain DSM 10527 / NCIMB 13988 / SH1).